A 361-amino-acid chain; its full sequence is Phosphoserine aminotransferase (361 aa).

L-glutamate is bound at residue Arg42. Residues 76–77, Trp102, Thr152, Asp172, and Gln195 each bind pyridoxal 5'-phosphate; that span reads AS. The residue at position 196 (Lys196) is an N6-(pyridoxal phosphate)lysine. Residue 237–238 coordinates pyridoxal 5'-phosphate; the sequence is NT.

The protein belongs to the class-V pyridoxal-phosphate-dependent aminotransferase family. SerC subfamily. Homodimer. The cofactor is pyridoxal 5'-phosphate.

The protein resides in the cytoplasm. The enzyme catalyses O-phospho-L-serine + 2-oxoglutarate = 3-phosphooxypyruvate + L-glutamate. It catalyses the reaction 4-(phosphooxy)-L-threonine + 2-oxoglutarate = (R)-3-hydroxy-2-oxo-4-phosphooxybutanoate + L-glutamate. Its pathway is amino-acid biosynthesis; L-serine biosynthesis; L-serine from 3-phospho-D-glycerate: step 2/3. Its function is as follows. Catalyzes the reversible conversion of 3-phosphohydroxypyruvate to phosphoserine and of 3-hydroxy-2-oxo-4-phosphonooxybutanoate to phosphohydroxythreonine. This chain is Phosphoserine aminotransferase, found in Halalkalibacterium halodurans (strain ATCC BAA-125 / DSM 18197 / FERM 7344 / JCM 9153 / C-125) (Bacillus halodurans).